The following is a 527-amino-acid chain: MSDLQDQEPSIIINGNLEPVGEPDIVEETEVVAQETQETQDADKPKKKVAFTGLEEDGETEEEKRKREFEEGGGLPEQPLNPDFSKLNPLSAEIINRQATINIGTIGHVAHGKSTVVRAISGVQTVRFKDELERNITIKLGYANAKIYKCQEPTCPEPDCYRSFKSDKEISPKCQRPGCPGRYKLVRHVSFVDCPGHDILMSTMLSGAAVMDAALLLIAGNESCPQPQTSEHLAAIEIMKLKHVIILQNKVDLMREESALEHQKSILKFIRGTIADGAPIVPISAQLKYNIDAVNEFIVKTIPVPPRDFMISPRLIVIRSFDVNKPGAEIEDLKGGVAGGSILNGVFKLGDEIEIRPGIVTKDDKGKIQCKPIFSNIVSLFAEQNDLKFAVPGGLIGVGTKVDPTLCRADRLVGQVVGAKGHLPNIYTDIEINYFLLRRLLGVKTDGQKQAKVRKLEPNEVLMVNIGSTATGARVVAVKADMARLQLTSPACTEINEKIALSRRIEKHWRLIGWATIKKGTTLEPIA.

The tract at residues 1 to 83 is disordered; sequence MSDLQDQEPS…GLPEQPLNPD (83 aa). Phosphothreonine is present on T60. Residues 98 to 307 enclose the tr-type G domain; sequence QATINIGTIG…IVKTIPVPPR (210 aa). The interval 107–114 is G1; it reads GHVAHGKS. A GTP-binding site is contributed by 110–115; that stretch reads AHGKST. A G2 region spans residues 135–139; the sequence is NITIK. The G3 stretch occupies residues 193 to 196; sequence DCPG. 249-252 is a GTP binding site; sequence NKVD. Residues 249–252 are G4; the sequence is NKVD. S258 carries the phosphoserine modification. 284-286 lines the GTP pocket; that stretch reads SAQ. Positions 284 to 286 are G5; it reads SAQ. An interacts with CDC123 region spans residues 515 to 527; sequence ATIKKGTTLEPIA.

It belongs to the TRAFAC class translation factor GTPase superfamily. Classic translation factor GTPase family. EIF2G subfamily. As to quaternary structure, eukaryotic translation initiation factor 2 eIF2 is a heterotrimeric complex composed of an alpha, a beta and a gamma subunit. The factors eIF-1, eIF-1A, eIF-2, eIF-3, TIF5/eIF-5 and methionyl-tRNAi form a multifactor complex (MFC) that may bind to the 40S ribosome. Interacts (via C-terminus) with CDC123; the interaction is direct. Interacts with GCD1. Interacts with the eIF2B complex subunits GCD6 and GCD7. Interacts with methionyl-initiator methionine tRNA.

It localises to the cytoplasm. It is found in the cytosol. The enzyme catalyses GTP + H2O = GDP + phosphate + H(+). Its function is as follows. As a subunit of eukaryotic initiation factor 2 eIF2, involved in the early steps of protein synthesis. In the presence of GTP, eIF-2 forms a ternary complex with initiator tRNA Met-tRNAi and then recruits the 40S ribosomal complex and initiation factors eIF-1, eIF-1A and eIF-3 to form the 43S pre-initiation complex (43S PIC), a step that determines the rate of protein translation. The 43S PIC binds to mRNA and scans downstream to the initiation codon, where it forms a 48S initiation complex by codon-anticodon base pairing. This leads to the displacement of eIF-1 to allow GTPase-activating protein (GAP) eIF-5-mediated hydrolysis of eIF2-bound GTP. Hydrolysis of GTP and release of Pi, which makes GTP hydrolysis irreversible, causes the release of the eIF-2-GDP binary complex from the 40S subunit, an event that is essential for the subsequent joining of the 60S ribosomal subunit to form an elongation-competent 80S ribosome. In order for eIF-2 to recycle and catalyze another round of initiation, the GDP bound to eIF-2 must be exchanged with GTP by way of a reaction catalyzed by GDP-GTP exchange factor (GEF) eIF-2B. This is Eukaryotic translation initiation factor 2 subunit gamma (GCD11) from Saccharomyces cerevisiae (strain ATCC 204508 / S288c) (Baker's yeast).